The primary structure comprises 89 residues: Small ribosomal subunit protein uS15 (89 aa).

Belongs to the universal ribosomal protein uS15 family. In terms of assembly, part of the 30S ribosomal subunit. Forms a bridge to the 50S subunit in the 70S ribosome, contacting the 23S rRNA.

One of the primary rRNA binding proteins, it binds directly to 16S rRNA where it helps nucleate assembly of the platform of the 30S subunit by binding and bridging several RNA helices of the 16S rRNA. Functionally, forms an intersubunit bridge (bridge B4) with the 23S rRNA of the 50S subunit in the ribosome. The protein is Small ribosomal subunit protein uS15 of Desulfosudis oleivorans (strain DSM 6200 / JCM 39069 / Hxd3) (Desulfococcus oleovorans).